Consider the following 113-residue polypeptide: Putative pterin-4-alpha-carbinolamine dehydratase (113 aa).

The protein belongs to the pterin-4-alpha-carbinolamine dehydratase family.

It catalyses the reaction (4aS,6R)-4a-hydroxy-L-erythro-5,6,7,8-tetrahydrobiopterin = (6R)-L-erythro-6,7-dihydrobiopterin + H2O. This is Putative pterin-4-alpha-carbinolamine dehydratase from Saccharophagus degradans (strain 2-40 / ATCC 43961 / DSM 17024).